The sequence spans 191 residues: Calcium-binding protein CML42 (191 aa).

EF-hand domains follow at residues 25–60 (LNALRLQRIFDLFDKNGDGFITVEELSQALTRLGLN), 116–151 (ENESDLAEAFKVFDENGDGFISARELQTVLKKLGLP), and 154–189 (GEMERVEKMIVSVDRNQDGRVDFFEFKNMMRTVVIP). Positions 38, 40, 42, 49, 129, 131, 133, 140, 167, 169, 171, 173, and 178 each coordinate Ca(2+).

In terms of assembly, interacts with KIC. In terms of tissue distribution, expressed in seedling shoots, roots, rosette leaves and flowers. Expressed in the leaf trichome support cells.

Functionally, probable calcium sensor that binds calcium in vitro. Involved in the regulation of trichome branching. The polypeptide is Calcium-binding protein CML42 (CML42) (Arabidopsis thaliana (Mouse-ear cress)).